We begin with the raw amino-acid sequence, 432 residues long: Glutamyl-tRNA reductase (432 aa).

Residues 49–52 (TCNR), S109, 114–116 (EGQ), and Q120 contribute to the substrate site. Catalysis depends on C50, which acts as the Nucleophile. An NADP(+)-binding site is contributed by 198–203 (GAGRMS).

The protein belongs to the glutamyl-tRNA reductase family. In terms of assembly, homodimer.

The enzyme catalyses (S)-4-amino-5-oxopentanoate + tRNA(Glu) + NADP(+) = L-glutamyl-tRNA(Glu) + NADPH + H(+). The protein operates within porphyrin-containing compound metabolism; protoporphyrin-IX biosynthesis; 5-aminolevulinate from L-glutamyl-tRNA(Glu): step 1/2. It participates in porphyrin-containing compound metabolism; chlorophyll biosynthesis. Catalyzes the NADPH-dependent reduction of glutamyl-tRNA(Glu) to glutamate 1-semialdehyde (GSA). This Synechococcus sp. (strain CC9902) protein is Glutamyl-tRNA reductase.